Reading from the N-terminus, the 120-residue chain is Small ribosomal subunit protein uS10 (120 aa).

A phosphoserine mark is found at S16 and S18.

Belongs to the universal ribosomal protein uS10 family. As to expression, expressed ubiquitously in embryos, highest expression is in the midgut.

The protein is Small ribosomal subunit protein uS10 (RpS20) of Drosophila melanogaster (Fruit fly).